The primary structure comprises 315 residues: Mycothiol acetyltransferase (315 aa).

N-acetyltransferase domains are found at residues 4–141 (LDWR…RPLR) and 152–315 (VVIR…GTDN). Glu-36 provides a ligand contact to 1D-myo-inositol 2-(L-cysteinylamino)-2-deoxy-alpha-D-glucopyranoside. Acetyl-CoA is bound by residues 80-82 (LVV) and 88-93 (RRGIGT). The 1D-myo-inositol 2-(L-cysteinylamino)-2-deoxy-alpha-D-glucopyranoside site is built by Glu-179, Lys-224, and Glu-234. Acetyl-CoA contacts are provided by residues 238–240 (LGV) and 245–251 (QRRGLGQ). Tyr-282 is a 1D-myo-inositol 2-(L-cysteinylamino)-2-deoxy-alpha-D-glucopyranoside binding site. 287 to 292 (NVAAVR) contacts acetyl-CoA.

It belongs to the acetyltransferase family. MshD subfamily. Monomer.

The enzyme catalyses 1D-myo-inositol 2-(L-cysteinylamino)-2-deoxy-alpha-D-glucopyranoside + acetyl-CoA = mycothiol + CoA + H(+). Functionally, catalyzes the transfer of acetyl from acetyl-CoA to desacetylmycothiol (Cys-GlcN-Ins) to form mycothiol. The protein is Mycothiol acetyltransferase of Mycobacterium bovis (strain ATCC BAA-935 / AF2122/97).